Reading from the N-terminus, the 774-residue chain is Pentatricopeptide repeat-containing protein At4g20770 (774 aa).

PPR repeat units lie at residues 5–39 (GNKYLASLLRCYRDERCKLSGKVIHGFIVRMGMKS), 40–70 (DTYLCNRLLDLYIECGDGDYARKVFDEMSVR), 71–101 (DVYSWNAFLTFRCKVGDLGEACEVFDGMPER), 102–136 (DVVSWNNMISVLVRKGFEEKALVVYKRMVCDGFLP), 137–171 (SRFTLASVLSACSKVLDGVFGMRCHGVAVKTGLDK), 172–203 (NIFVGNALLSMYAKCGFIVDYGVRVFESLSQP), 204–238 (NEVSYTAVIGGLARENKVLEAVQMFRLMCEKGVQV), 239–270 (DSVCLSNILSISAPREGCDSLSEIYGNELGKQ), 283–313 (DLHLNNSLLEIYAKNKDMNGAELIFAEMPEV), 314–348 (NVVSWNIMIVGFGQEYRSDKSVEFLTRMRDSGFQP), 349–379 (NEVTCISVLGACFRSGDVETGRRIFSSIPQP), 380–414 (SVSAWNAMLSGYSNYEHYEEAISNFRQMQFQNLKP), 415–449 (DKTTLSVILSSCARLRFLEGGKQIHGVVIRTEISK), 450–480 (NSHIVSGLIAVYSECEKMEISECIFDDCINE), 482–516 (DIACWNSMISGFRHNMLDTKALILFRRMHQTAVLC), 518–552 (NETSFATVLSSCSRLCSLLHGRQFHGLVVKSGYVS), 553–583 (DSFVETALTDMYCKCGEIDSARQFFDAVLRK), 584–618 (NTVIWNEMIHGYGHNGRGDEAVGLYRKMISSGEKP), 619–654 (DGITFVSVLTACSHSGLVETGLEILSSMQRIHGIEP), and 655–685 (ELDHYICIVDCLGRAGRLEDAEKLAEATPYK). Residues 690 to 765 (LWEILLSSCR…TPGQSWTTYG (76 aa)) form a type E motif region.

It belongs to the PPR family. PCMP-E subfamily.

This chain is Pentatricopeptide repeat-containing protein At4g20770 (PCMP-E35), found in Arabidopsis thaliana (Mouse-ear cress).